A 262-amino-acid chain; its full sequence is Octanoyltransferase (262 aa).

One can recognise a BPL/LPL catalytic domain in the interval 41–232 (PQLPDGLLLL…SFCQVFGLQA (192 aa)). Residues 96–103 (RGGEVTYH), 163–165 (AIG), and 176–178 (GFA) contribute to the substrate site. Cys194 (acyl-thioester intermediate) is an active-site residue.

This sequence belongs to the LipB family.

It is found in the cytoplasm. The catalysed reaction is octanoyl-[ACP] + L-lysyl-[protein] = N(6)-octanoyl-L-lysyl-[protein] + holo-[ACP] + H(+). Its pathway is protein modification; protein lipoylation via endogenous pathway; protein N(6)-(lipoyl)lysine from octanoyl-[acyl-carrier-protein]: step 1/2. In terms of biological role, catalyzes the transfer of endogenously produced octanoic acid from octanoyl-acyl-carrier-protein onto the lipoyl domains of lipoate-dependent enzymes. Lipoyl-ACP can also act as a substrate although octanoyl-ACP is likely to be the physiological substrate. This chain is Octanoyltransferase, found in Synechococcus sp. (strain JA-2-3B'a(2-13)) (Cyanobacteria bacterium Yellowstone B-Prime).